We begin with the raw amino-acid sequence, 207 residues long: MAVDYSLYLVTDRILVGPKDFLLSIRKALEGGVTLLQLREKETNSREFYDIGVKVKELAAEFGVPLIINDRVDLALALDADGVHVGQQDLPLAKVRNIIGPDKILGYSVSSLEEALQGERMGADYLGAGPVFPTGSKKDAAEAIGLAKLKEIKAGVSLPVVGIGGIGAANLRVVKETGIDGVSVISAILSQEDPCAAAKGLVDLWRN.

Residues 37–41 (QLREK) and asparagine 69 each bind 4-amino-2-methyl-5-(diphosphooxymethyl)pyrimidine. The Mg(2+) site is built by aspartate 70 and aspartate 89. Serine 108 provides a ligand contact to 4-amino-2-methyl-5-(diphosphooxymethyl)pyrimidine. Residue 134-136 (TGS) coordinates 2-[(2R,5Z)-2-carboxy-4-methylthiazol-5(2H)-ylidene]ethyl phosphate. Residue lysine 137 coordinates 4-amino-2-methyl-5-(diphosphooxymethyl)pyrimidine. Residues glycine 165 and 185–186 (IS) contribute to the 2-[(2R,5Z)-2-carboxy-4-methylthiazol-5(2H)-ylidene]ethyl phosphate site.

Belongs to the thiamine-phosphate synthase family. The cofactor is Mg(2+).

It catalyses the reaction 2-[(2R,5Z)-2-carboxy-4-methylthiazol-5(2H)-ylidene]ethyl phosphate + 4-amino-2-methyl-5-(diphosphooxymethyl)pyrimidine + 2 H(+) = thiamine phosphate + CO2 + diphosphate. It carries out the reaction 2-(2-carboxy-4-methylthiazol-5-yl)ethyl phosphate + 4-amino-2-methyl-5-(diphosphooxymethyl)pyrimidine + 2 H(+) = thiamine phosphate + CO2 + diphosphate. The enzyme catalyses 4-methyl-5-(2-phosphooxyethyl)-thiazole + 4-amino-2-methyl-5-(diphosphooxymethyl)pyrimidine + H(+) = thiamine phosphate + diphosphate. It participates in cofactor biosynthesis; thiamine diphosphate biosynthesis; thiamine phosphate from 4-amino-2-methyl-5-diphosphomethylpyrimidine and 4-methyl-5-(2-phosphoethyl)-thiazole: step 1/1. Condenses 4-methyl-5-(beta-hydroxyethyl)thiazole monophosphate (THZ-P) and 2-methyl-4-amino-5-hydroxymethyl pyrimidine pyrophosphate (HMP-PP) to form thiamine monophosphate (TMP). This Desulfitobacterium hafniense (strain DSM 10664 / DCB-2) protein is Thiamine-phosphate synthase.